Consider the following 231-residue polypeptide: 5'-methylthioadenosine/S-adenosylhomocysteine nucleosidase (231 aa).

The active-site Proton acceptor is Glu-12. Substrate contacts are provided by residues Gly-78, Met-153, and 174-175; that span reads ME. The Proton donor role is filled by Asp-198.

The protein belongs to the PNP/UDP phosphorylase family. MtnN subfamily.

The catalysed reaction is S-adenosyl-L-homocysteine + H2O = S-(5-deoxy-D-ribos-5-yl)-L-homocysteine + adenine. It catalyses the reaction S-methyl-5'-thioadenosine + H2O = 5-(methylsulfanyl)-D-ribose + adenine. It carries out the reaction 5'-deoxyadenosine + H2O = 5-deoxy-D-ribose + adenine. Its pathway is amino-acid biosynthesis; L-methionine biosynthesis via salvage pathway; S-methyl-5-thio-alpha-D-ribose 1-phosphate from S-methyl-5'-thioadenosine (hydrolase route): step 1/2. In terms of biological role, catalyzes the irreversible cleavage of the glycosidic bond in both 5'-methylthioadenosine (MTA) and S-adenosylhomocysteine (SAH/AdoHcy) to adenine and the corresponding thioribose, 5'-methylthioribose and S-ribosylhomocysteine, respectively. Also cleaves 5'-deoxyadenosine, a toxic by-product of radical S-adenosylmethionine (SAM) enzymes, into 5-deoxyribose and adenine. The polypeptide is 5'-methylthioadenosine/S-adenosylhomocysteine nucleosidase (Bacillus cytotoxicus (strain DSM 22905 / CIP 110041 / 391-98 / NVH 391-98)).